The following is a 394-amino-acid chain: MKFLAAASLLVASTLAVPTSSGGSCRPRPPPGGGNGGNGGNGGNGGNGYQPCPAGLYSNPQCCATDVLGVADLDCKNPSSAPMSGDNFKSICNAVGQQAKCCVLPVAGQAVLCQDSINGGGNGGNNGGNGGNNGGNGGNNGGNTDYPGGNGGNNGGNNGGNNGGNNGGNNGGNNGGNNGGNNGGNNGGNNGGNGGNGGNGYQACPAGLLYSNPQCCSTGVLGVADLDCKNPSSAPTSGDDFQKICANGGQQAQCCSIPVAGQAVLCQPAIGGGNPGGNGGNNGGNGGNGGNNGGNNGGNGDYPGGNGGNNGGSNGGGNGGNGGNGGSFKCPSGLYSVPQCCATDVLGVADLDCGNPSRQPTDSSDFASVCAAKGQRARCCVLPLLGQAVLCTGA.

The first 16 residues, 1–16, serve as a signal peptide directing secretion; that stretch reads MKFLAAASLLVASTLA. A disordered region spans residues 17 to 42; it reads VPTSSGGSCRPRPPPGGGNGGNGGNG. The segment covering 33 to 42 has biased composition (gly residues); sequence GGNGGNGGNG. The hydrophobin 1 stretch occupies residues 48–117; the sequence is GYQPCPAGLY…GQAVLCQDSI (70 aa). 4 disulfide bridges follow: cysteine 52–cysteine 101, cysteine 62–cysteine 92, cysteine 63–cysteine 75, and cysteine 102–cysteine 113. The disordered stretch occupies residues 135–157; that stretch reads GNGGNNGGNTDYPGGNGGNNGGN. Positions 148–157 are enriched in gly residues; the sequence is GGNGGNNGGN. Hydrophobin regions lie at residues 200 to 270 and 326 to 394; these read GYQA…QPAI and GSFK…CTGA.

Belongs to the cerato-ulmin hydrophobin family. As to quaternary structure, homotetramer. Further self-assembles to form highly ordered films at water-air interfaces through intermolecular interactions. Several N-termini starting at positions 17, 20, 22, 28 and 48 have been identified by direct sequencing. Post-translationally, contains a number of intrachain disulfide bonds. In terms of processing, not glycosylated.

The protein localises to the secreted. It is found in the cell wall. Functionally, aerial growth, conidiation, and dispersal of filamentous fungi in the environment rely upon a capability of their secreting small amphipathic proteins called hydrophobins (HPBs) with low sequence identity. Class I can self-assemble into an outermost layer of rodlet bundles on aerial cell surfaces, conferring cellular hydrophobicity that supports fungal growth, development and dispersal; whereas Class II form highly ordered films at water-air interfaces through intermolecular interactions but contribute nothing to the rodlet structure. TH1 is a class II hydrophobin that reduces water surface tension dramatically upon assembly at the water-air interface and plays a role in the formation of aerial hyphae. The protein is Class II hydrophobin TH1 (TH1) of Claviceps fusiformis (Ergot fungus).